The sequence spans 364 residues: MWLERLELQHFRNYNQLDIEFHKGLNVFLGENAQGKTNILESIYVLALTRSHRTRTDKDLLQFQEKELSISGLLHRTSGKVPLDIHLTDKGRVTKVNHLKQAKLSNYIGHMNVVLFAPEDLQLIKGAPALRRKFIDVELGQIKPLYLSDLSNYNHVLKQRNTYLKSTDKIDENFLSVLDQQLAEYGSRVIQHRIDFLKKLEEFGNRKVQEISGNREELTIEYQTSIELTDDVNLIDKFLTELEKSRKRDLFKKNTGVGPHRDDVAFFINGMNAHYASQGQHRSLVLSLKLAEIELMKEVTREYPILLLDDVMSELDNNRQIKLLETITDTIQTFITTTSLDHLHKLPDSLKIFHIESGKVTESE.

Glycine 30 to threonine 37 is a binding site for ATP.

This sequence belongs to the RecF family.

The protein resides in the cytoplasm. The RecF protein is involved in DNA metabolism; it is required for DNA replication and normal SOS inducibility. RecF binds preferentially to single-stranded, linear DNA. It also seems to bind ATP. In Streptococcus suis (strain 98HAH33), this protein is DNA replication and repair protein RecF.